The chain runs to 647 residues: Chaperone protein DnaK (647 aa).

Thr-198 bears the Phosphothreonine; by autocatalysis mark. Composition is skewed to basic and acidic residues over residues 514–529 (AEAN…ESVD), 540–557 (STEK…DADK), and 600–622 (SQEK…KDDN). Disordered regions lie at residues 514 to 557 (AEAN…DADK) and 596 to 647 (AIYK…EKSA). Over residues 623-632 (VVDADFEEVK) the composition is skewed to acidic residues. Residues 633–647 (EESKEGKEEDKEKSA) are compositionally biased toward basic and acidic residues.

The protein belongs to the heat shock protein 70 family.

Acts as a chaperone. The sequence is that of Chaperone protein DnaK from Pelagibacter ubique (strain HTCC1062).